A 130-amino-acid polypeptide reads, in one-letter code: Ribonuclease VapC46 (130 aa).

The region spanning 4–118 is the PINc domain; that stretch reads IYLDSSAIVK…CTYDDRMRDA (115 aa). Aspartate 7 and aspartate 91 together coordinate Mg(2+).

Belongs to the PINc/VapC protein family. Requires Mg(2+) as cofactor.

Toxic component of a type II toxin-antitoxin (TA) system. An RNase. Upon expression in M.smegmatis inhibits colony formation. Its toxic effect is neutralized by coexpression with cognate antitoxin VapB46. In Mycobacterium tuberculosis (strain ATCC 25618 / H37Rv), this protein is Ribonuclease VapC46.